The primary structure comprises 783 residues: BMP/retinoic acid-inducible neural-specific protein 2 (783 aa).

An N-terminal signal peptide occupies residues 1 to 33 (MRWQCGTRFRGLRPAVAPWTALLALGLPGWVLA). The MACPF domain occupies 85 to 281 (RYRIYREFAR…FVAAALSYIT (197 aa)). Residues N185, N354, N473, N579, N626, and N658 are each glycosylated (N-linked (GlcNAc...) asparagine).

The protein belongs to the BRINP family.

It localises to the secreted. Its function is as follows. Inhibits neuronal cell proliferation by negative regulation of the cell cycle transition. In Homo sapiens (Human), this protein is BMP/retinoic acid-inducible neural-specific protein 2 (BRINP2).